A 491-amino-acid chain; its full sequence is Ketol-acid reductoisomerase (NADP(+)) (491 aa).

A KARI N-terminal Rossmann domain is found at 15–208 (AQLGKCRFMA…GGHRAGVLES (194 aa)). Residues 45 to 48 (CGAQ), arginine 68, arginine 76, serine 78, and 108 to 110 (DKQ) each bind NADP(+). Histidine 132 is an active-site residue. NADP(+) is bound at residue glycine 158. KARI C-terminal knotted domains lie at 209-344 (SFVA…NAPQ) and 345-484 (FEGK…MTDM). Positions 217, 221, 389, and 393 each coordinate Mg(2+). Serine 414 provides a ligand contact to substrate.

Belongs to the ketol-acid reductoisomerase family. Requires Mg(2+) as cofactor.

The catalysed reaction is (2R)-2,3-dihydroxy-3-methylbutanoate + NADP(+) = (2S)-2-acetolactate + NADPH + H(+). The enzyme catalyses (2R,3R)-2,3-dihydroxy-3-methylpentanoate + NADP(+) = (S)-2-ethyl-2-hydroxy-3-oxobutanoate + NADPH + H(+). The protein operates within amino-acid biosynthesis; L-isoleucine biosynthesis; L-isoleucine from 2-oxobutanoate: step 2/4. Its pathway is amino-acid biosynthesis; L-valine biosynthesis; L-valine from pyruvate: step 2/4. Its function is as follows. Involved in the biosynthesis of branched-chain amino acids (BCAA). Catalyzes an alkyl-migration followed by a ketol-acid reduction of (S)-2-acetolactate (S2AL) to yield (R)-2,3-dihydroxy-isovalerate. In the isomerase reaction, S2AL is rearranged via a Mg-dependent methyl migration to produce 3-hydroxy-3-methyl-2-ketobutyrate (HMKB). In the reductase reaction, this 2-ketoacid undergoes a metal-dependent reduction by NADPH to yield (R)-2,3-dihydroxy-isovalerate. The polypeptide is Ketol-acid reductoisomerase (NADP(+)) (Serratia proteamaculans (strain 568)).